Consider the following 37-residue polypeptide: Potassium channel toxin alpha-KTx 15.3 (37 aa).

At Gln1 the chain carries Pyrrolidone carboxylic acid. 3 disulfides stabilise this stretch: Cys8–Cys28, Cys13–Cys33, and Cys17–Cys35.

As to expression, expressed by the venom gland.

The protein localises to the secreted. Inhibits A-type (Kv4) voltage-gated potassium channels of striated neurons (Ki=131 nM), probably by acting as a pore blocker. Has also been shown to block ERG1/Kv11.1/KCNH2 potassium channels (IC(50)=7.9 uM). The presence of the Kv4-associated proteins DPP6 or DPP10 is mandatory to have high-affinity blockade of Kv4.2/KCND2 and Kv4.3/KCND3 channels (80-90% inhibition at 500 nM of toxin). In contrast, the presence of the Kv4-associated protein KChIP1/KCNIP1 does not enhance the affinity blockade (only 40% inhibition at 500 nM). In adult rat brain, the toxin binds to sites in the striatum, and cerebellum. It shares the same target in rat brain than AaTX1 (AC Q867F4) and BmTX3 (AC Q8I0L5). In DPP6 knockout mice, A-type currents are about 20-fold less affected by the toxin. In rodent models of Parkinson's disease, the toxin reduces motor symptoms and emotional and cognitive symptoms. This Androctonus mauritanicus mauritanicus (Scorpion) protein is Potassium channel toxin alpha-KTx 15.3.